A 193-amino-acid polypeptide reads, in one-letter code: MRKEIILASNSPRRIYLLGQIGIDFKVVSPNVEEEGNSERRSPVDIVKSNALKKVQKVAEEYRNAIIIGADTVVVLDGEIIGKPKDERDAIRILKRLRDRYHFVFSGVAVMETPEEKVLTSVVRSKVKMRDYSDEEIERYVATGEPMDKAGAYGIQGKGALLVEKIEGDYYNIVGLPLVRLNSLLNRFGYSLL.

Aspartate 71 functions as the Proton acceptor in the catalytic mechanism.

Belongs to the Maf family. YhdE subfamily. Requires a divalent metal cation as cofactor.

It is found in the cytoplasm. It catalyses the reaction dTTP + H2O = dTMP + diphosphate + H(+). It carries out the reaction UTP + H2O = UMP + diphosphate + H(+). Its function is as follows. Nucleoside triphosphate pyrophosphatase that hydrolyzes dTTP and UTP. May have a dual role in cell division arrest and in preventing the incorporation of modified nucleotides into cellular nucleic acids. The protein is dTTP/UTP pyrophosphatase of Dictyoglomus turgidum (strain DSM 6724 / Z-1310).